Reading from the N-terminus, the 334-residue chain is Ornithine carbamoyltransferase (334 aa).

Carbamoyl phosphate contacts are provided by residues 57-60 (STRT), glutamine 84, arginine 108, and 135-138 (HPTQ). L-ornithine-binding positions include asparagine 169, aspartate 233, and 237-238 (SM). Carbamoyl phosphate-binding positions include 275–276 (CL) and arginine 320.

It belongs to the aspartate/ornithine carbamoyltransferase superfamily. OTCase family.

It is found in the cytoplasm. It catalyses the reaction carbamoyl phosphate + L-ornithine = L-citrulline + phosphate + H(+). Its pathway is amino-acid biosynthesis; L-arginine biosynthesis; L-arginine from L-ornithine and carbamoyl phosphate: step 1/3. Its function is as follows. Reversibly catalyzes the transfer of the carbamoyl group from carbamoyl phosphate (CP) to the N(epsilon) atom of ornithine (ORN) to produce L-citrulline. This is Ornithine carbamoyltransferase from Aeromonas salmonicida (strain A449).